The following is a 687-amino-acid chain: Glycine--tRNA ligase beta subunit (687 aa).

Belongs to the class-II aminoacyl-tRNA synthetase family. In terms of assembly, tetramer of two alpha and two beta subunits.

The protein resides in the cytoplasm. It catalyses the reaction tRNA(Gly) + glycine + ATP = glycyl-tRNA(Gly) + AMP + diphosphate. The protein is Glycine--tRNA ligase beta subunit of Lactobacillus acidophilus (strain ATCC 700396 / NCK56 / N2 / NCFM).